We begin with the raw amino-acid sequence, 937 residues long: uncharacterized protein (937 aa).

N-acetylthreonine is present on Thr-2. Residues 281–937 (NESPSSNINT…KKGKGKGGRK (657 aa)) form a disordered region. The segment covering 290-308 (TTTTSTTTTTTTTTSSPVV) has biased composition (low complexity). The Charge relay system role is filled by Thr-292. 8 stretches are compositionally biased toward basic and acidic residues: residues 309 to 402 (EESK…EKQQ), 411 to 431 (AEKERLEKEEADKLEKERLEA), 469 to 489 (AEKERLEKEEADRLEKEKLEA), 512 to 532 (AEKERLEKEETERLEKEKLEA), 600 to 615 (AEKEEAERLEKEKLEA), 667 to 687 (AEKERLEKEEAERLEKEKLEA), 738 to 758 (AEKERLEKEETERLEKERLEA), and 780 to 872 (AEKE…KVEE). Residues 345-802 (VDDSKEKEEK…KAAEETKVEE (458 aa)) are a coiled coil. Over residues 887–897 (EETEEGEEVDE) the composition is skewed to acidic residues. Residues 898–924 (ASNTTTEQTTTNANQPKKPNNNNNNNK) show a composition bias toward low complexity. Residues 925 to 937 (GKGKKGKGKGGRK) are compositionally biased toward basic residues.

Belongs to the AB hydrolase superfamily.

This is an uncharacterized protein from Dictyostelium discoideum (Social amoeba).